The primary structure comprises 789 residues: Fibrinogen alpha chain (789 aa).

The N-terminal stretch at 1-19 is a signal peptide; it reads MLSLRVTCLILSVASTVWT. Position 46 is a phosphoserine (serine 46). A coiled-coil region spans residues 69-554; that stretch reads CRMKGLIDEA…GRARARPTRD (486 aa). Composition is skewed to basic and acidic residues over residues 263-287 and 384-396; these read ERPGKDGGSRGDSPGDSRGDSRGDF and KGDKELLIGKEKV. The segment at 263–420 is disordered; the sequence is ERPGKDGGSR…TITKTVTGPD (158 aa). Over residues 397-416 the composition is skewed to polar residues; that stretch reads TSSGTSTTHRSCSKTITKTV. A disulfide bridge links cysteine 408 with cysteine 438. Serine 447 is modified (phosphoserine). Residue proline 504 is modified to 4-hydroxyproline; by P4HA1. Residues 526-541 are compositionally biased toward basic and acidic residues; that stretch reads ADEAGSEAHREGETRN. Residues 526–555 form a disordered region; that stretch reads ADEAGSEAHREGETRNTKRGRARARPTRDC. The region spanning 546 to 787 is the Fibrinogen C-terminal domain; it reads RARARPTRDC…AVRMKIRPLV (242 aa). Asparagine 609 carries N-linked (GlcNAc...) asparagine glycosylation. Ca(2+)-binding residues include aspartate 714, aspartate 716, tryptophan 718, and glutamate 720. The cysteines at positions 722 and 735 are disulfide-linked.

Heterohexamer; disulfide linked. Contains 2 sets of 3 non-identical chains (alpha, beta and gamma). The 2 heterotrimers are in head to head conformation with the N-termini in a small central domain. Conversion of fibrinogen to fibrin is triggered by thrombin, which cleaves fibrinopeptides A and B from alpha and beta chains, and thus exposes the N-terminal polymerization sites responsible for the formation of the soft clot. The soft clot is converted into the hard clot by factor XIIIA which catalyzes the epsilon-(gamma-glutamyl)lysine cross-linking between gamma chains (stronger) and between alpha chains (weaker) of different monomers. Post-translationally, forms F13A-mediated cross-links between a glutamine and the epsilon-amino group of a lysine residue, forming fibronectin-fibrinogen heteropolymers. In terms of processing, phosphorylated by FAM20C in the extracellular medium. In terms of tissue distribution, expressed in liver.

The protein resides in the secreted. Functionally, cleaved by the protease thrombin to yield monomers which, together with fibrinogen beta (FGB) and fibrinogen gamma (FGG), polymerize to form an insoluble fibrin matrix. Fibrin has a major function in hemostasis as one of the primary components of blood clots. In addition, functions during the early stages of wound repair to stabilize the lesion and guide cell migration during re-epithelialization. Was originally thought to be essential for platelet aggregation, based on in vitro studies using anticoagulated blood. However, subsequent studies have shown that it is not absolutely required for thrombus formation in vivo. Enhances expression of SELP in activated platelets via an ITGB3-dependent pathway. Maternal fibrinogen is essential for successful pregnancy. Fibrin deposition is also associated with infection, where it protects against IFNG-mediated hemorrhage. May also facilitate the immune response via both innate and T-cell mediated pathways. This Mus musculus (Mouse) protein is Fibrinogen alpha chain.